A 327-amino-acid polypeptide reads, in one-letter code: Tryptophan--tRNA ligase (327 aa).

ATP-binding positions include 9-11 and 17-18; these read QPS and GN. The 'HIGH' region signature appears at 10-18; the sequence is PSGTLTLGN. Asp-132 contributes to the L-tryptophan binding site. Residues 144-146, Ile-183, and 192-196 each bind ATP; these read GDD and KMSKS. A 'KMSKS' region motif is present at residues 192–196; the sequence is KMSKS.

Belongs to the class-I aminoacyl-tRNA synthetase family. Homodimer.

Its subcellular location is the cytoplasm. It carries out the reaction tRNA(Trp) + L-tryptophan + ATP = L-tryptophyl-tRNA(Trp) + AMP + diphosphate + H(+). Functionally, catalyzes the attachment of tryptophan to tRNA(Trp). This Oceanobacillus iheyensis (strain DSM 14371 / CIP 107618 / JCM 11309 / KCTC 3954 / HTE831) protein is Tryptophan--tRNA ligase.